Reading from the N-terminus, the 565-residue chain is MGGCYSAYASSRKLRGRISKISLVIPDPVPDAEAASPRKDGVDGDGDDVRGGGGGCDDGGDVVAIATTTADEFARRYVLGKELGRGEFGVTRRCSDAATGEALACKTIRKHRRLAPPRVTAAKAAAAHGEDVKREVAIMRRMSSASSSRGGGAASSAAVVRLREACEDAADGSVHLVMELCEGGELFDRIVARGHYSERAAANIFRTIVDVVQLCHSNGVIHRDLKPENFLFANKSEDSPLKVIDFGLSVFFKPGDRFTEVVGSAYYMAPEVLRRSYGPEVDVWSAGVILYILLCGVPPFWGDNDEKIAQAILRGAIDFNREPLPRVSANAKDLVRRMLDPNPSTRLTAKQVLEHPWLKNADTAPNVSLGDAVRARLQQFSAMNKFKKKALGVVARNLPGEEVDKYVQMFHHMDKDKNGHLSLDELLEGLHINGQPVPEPEIRMLLEAADTDGNGTLDCDEFVTVSVHLKKMSNDEYLAAAFNYFDKDGSGFIELDELREEVGPNEQAILEILRDVDTDKDGRISYQEFELMMKSGADWRNASRHFSRANFSTLSRRLCKDTLTP.

Residue G2 is the site of N-myristoyl glycine attachment. The interval 28–55 (PVPDAEAASPRKDGVDGDGDDVRGGGGG) is disordered. Residues 36 to 50 (SPRKDGVDGDGDDVR) show a composition bias toward basic and acidic residues. The 282-residue stretch at 77–358 (YVLGKELGRG…AKQVLEHPWL (282 aa)) folds into the Protein kinase domain. ATP-binding positions include 83–91 (LGRGEFGVT) and K106. The active-site Proton acceptor is the D224. The interval 364-394 (APNVSLGDAVRARLQQFSAMNKFKKKALGVV) is autoinhibitory domain. 4 consecutive EF-hand domains span residues 401–436 (EEVD…NGQP), 437–472 (VPEP…LKKM), 473–500 (SNDE…ELRE), and 504–539 (PNEQ…GADW). Ca(2+) is bound by residues D414, D416, N418, H420, E425, D450, D452, N454, T456, E461, D486, D488, S490, E497, D517, D519, D521, R523, and E528.

It belongs to the protein kinase superfamily. Ser/Thr protein kinase family. CDPK subfamily. Expressed in spikelets and developing seeds.

It localises to the membrane. It catalyses the reaction L-seryl-[protein] + ATP = O-phospho-L-seryl-[protein] + ADP + H(+). The catalysed reaction is L-threonyl-[protein] + ATP = O-phospho-L-threonyl-[protein] + ADP + H(+). Its activity is regulated as follows. Activated by calcium. Autophosphorylation may play an important role in the regulation of the kinase activity. May play a role in signal transduction pathways that involve calcium as a second messenger. Functions in signal transduction pathways that positively regulate responses to abscisic acid (ABA) and salt stress. In Oryza sativa subsp. japonica (Rice), this protein is Calcium-dependent protein kinase 21.